We begin with the raw amino-acid sequence, 406 residues long: O-succinylhomoserine sulfhydrylase (406 aa).

Lys-219 bears the N6-(pyridoxal phosphate)lysine mark.

Belongs to the trans-sulfuration enzymes family. MetZ subfamily. Homotetramer. It depends on pyridoxal 5'-phosphate as a cofactor.

The enzyme catalyses O-succinyl-L-homoserine + hydrogen sulfide = L-homocysteine + succinate. It participates in amino-acid biosynthesis; L-methionine biosynthesis via de novo pathway; L-homocysteine from O-succinyl-L-homoserine: step 1/1. Catalyzes the formation of L-homocysteine from O-succinyl-L-homoserine (OSHS) and hydrogen sulfide. The chain is O-succinylhomoserine sulfhydrylase from Mycobacterium tuberculosis (strain CDC 1551 / Oshkosh).